The sequence spans 234 residues: MTLSEQNIDKEELAKFSDLAQDWWNPAGKMKPLHLINPVRLKYIEQQITLKGKHVLDVGCGGGLLSEALAKHGAIVTGVDMSESLIDVAKNHAEQQQLNINYQCQDIEILTKDAQRFDIITCMELLEHVPDPQRMIKNCAALIKPGGKLFFSTINRNFKAYLYTIVGAEYVFNLLPKGTHDYAQFIRPSELTQWAESGGLRLLDITGIHYHPLKNEFDLSRDVSVNYLACFTHE.

Positions 40, 59, 80, and 123 each coordinate S-adenosyl-L-methionine.

It belongs to the methyltransferase superfamily. UbiG/COQ3 family.

The enzyme catalyses a 3-demethylubiquinol + S-adenosyl-L-methionine = a ubiquinol + S-adenosyl-L-homocysteine + H(+). It carries out the reaction a 3-(all-trans-polyprenyl)benzene-1,2-diol + S-adenosyl-L-methionine = a 2-methoxy-6-(all-trans-polyprenyl)phenol + S-adenosyl-L-homocysteine + H(+). The protein operates within cofactor biosynthesis; ubiquinone biosynthesis. Functionally, O-methyltransferase that catalyzes the 2 O-methylation steps in the ubiquinone biosynthetic pathway. This is Ubiquinone biosynthesis O-methyltransferase from Coxiella burnetii (strain CbuG_Q212) (Coxiella burnetii (strain Q212)).